We begin with the raw amino-acid sequence, 357 residues long: Ferrochelatase (357 aa).

Positions 193 and 272 each coordinate Fe cation.

The protein belongs to the ferrochelatase family.

It localises to the cytoplasm. It catalyses the reaction heme b + 2 H(+) = protoporphyrin IX + Fe(2+). It functions in the pathway porphyrin-containing compound metabolism; protoheme biosynthesis; protoheme from protoporphyrin-IX: step 1/1. Its function is as follows. Catalyzes the ferrous insertion into protoporphyrin IX. The protein is Ferrochelatase of Hyphomonas neptunium (strain ATCC 15444).